Here is a 118-residue protein sequence, read N- to C-terminus: Large ribosomal subunit protein uL24 (118 aa).

The protein belongs to the universal ribosomal protein uL24 family. In terms of assembly, part of the 50S ribosomal subunit.

In terms of biological role, one of two assembly initiator proteins, it binds directly to the 5'-end of the 23S rRNA, where it nucleates assembly of the 50S subunit. One of the proteins that surrounds the polypeptide exit tunnel on the outside of the subunit. The sequence is that of Large ribosomal subunit protein uL24 from Prochlorococcus marinus (strain MIT 9303).